Consider the following 347-residue polypeptide: S-adenosylmethionine:tRNA ribosyltransferase-isomerase (347 aa).

Belongs to the QueA family. In terms of assembly, monomer.

It localises to the cytoplasm. The enzyme catalyses 7-aminomethyl-7-carbaguanosine(34) in tRNA + S-adenosyl-L-methionine = epoxyqueuosine(34) in tRNA + adenine + L-methionine + 2 H(+). Its pathway is tRNA modification; tRNA-queuosine biosynthesis. Its function is as follows. Transfers and isomerizes the ribose moiety from AdoMet to the 7-aminomethyl group of 7-deazaguanine (preQ1-tRNA) to give epoxyqueuosine (oQ-tRNA). The polypeptide is S-adenosylmethionine:tRNA ribosyltransferase-isomerase (Treponema denticola (strain ATCC 35405 / DSM 14222 / CIP 103919 / JCM 8153 / KCTC 15104)).